A 298-amino-acid chain; its full sequence is Bifunctional methyltransferase/endonuclease (298 aa).

A probable methylated-DNA--protein-cysteine methyltransferase region spans residues 1-79 (MQSIDLYSYL…SLGIDEKIRR (79 aa)). Residue Cys-56 is part of the active site. The segment at 80 to 298 (LRNDGIEINN…TVALRRNNII (219 aa)) is endonuclease V. 2 residues coordinate Mg(2+): Asp-137 and Asp-197.

The protein in the N-terminal section; belongs to the MGMT family. In the C-terminal section; belongs to the endonuclease V family. Requires Mg(2+) as cofactor.

The protein resides in the cytoplasm. It catalyses the reaction Endonucleolytic cleavage at apurinic or apyrimidinic sites to products with a 5'-phosphate.. Its function is as follows. DNA repair enzyme involved in the repair of deaminated bases. Selectively cleaves double-stranded DNA at the second phosphodiester bond 3' to a deoxyinosine leaving behind the intact lesion on the nicked DNA. The chain is Bifunctional methyltransferase/endonuclease from Picrophilus torridus (strain ATCC 700027 / DSM 9790 / JCM 10055 / NBRC 100828 / KAW 2/3).